Here is a 615-residue protein sequence, read N- to C-terminus: uncharacterized protein (615 aa).

Asp403 (proton acceptor) is an active-site residue. Catalysis depends on Glu406, which acts as the Proton donor.

It belongs to the glycosyl hydrolase 15 family.

This is an uncharacterized protein from Methanocaldococcus jannaschii (strain ATCC 43067 / DSM 2661 / JAL-1 / JCM 10045 / NBRC 100440) (Methanococcus jannaschii).